The following is a 206-amino-acid chain: Protein-methionine-sulfoxide reductase heme-binding subunit MsrQ (206 aa).

6 helical membrane-spanning segments follow: residues 14 to 34 (IKPL…WLGA), 45 to 65 (FLTR…LAIT), 82 to 102 (MCGL…VWWD), 118 to 138 (PFIT…ATST), 149 to 169 (WQTL…HFWW), and 179 to 199 (QPLL…AAWW).

It belongs to the MsrQ family. In terms of assembly, heterodimer of a catalytic subunit (MsrP) and a heme-binding subunit (MsrQ). FMN is required as a cofactor. The cofactor is heme b.

Its subcellular location is the cell inner membrane. Part of the MsrPQ system that repairs oxidized periplasmic proteins containing methionine sulfoxide residues (Met-O), using respiratory chain electrons. Thus protects these proteins from oxidative-stress damage caused by reactive species of oxygen and chlorine generated by the host defense mechanisms. MsrPQ is essential for the maintenance of envelope integrity under bleach stress, rescuing a wide series of structurally unrelated periplasmic proteins from methionine oxidation. MsrQ provides electrons for reduction to the reductase catalytic subunit MsrP, using the quinone pool of the respiratory chain. This Bordetella pertussis (strain Tohama I / ATCC BAA-589 / NCTC 13251) protein is Protein-methionine-sulfoxide reductase heme-binding subunit MsrQ.